The following is a 363-amino-acid chain: Protein-glutamate methylesterase/protein-glutamine glutaminase 3 (363 aa).

A Response regulatory domain is found at 8–125; it reads KVLCVDDSAL…RDGMLDYAEK (118 aa). D59 is modified (4-aspartylphosphate). The CheB-type methylesterase domain maps to 164–356; that stretch reads LVSTEKLIII…RRVMARLATM (193 aa). Residues S176, H202, and D298 contribute to the active site.

The protein belongs to the CheB family. Phosphorylated by CheA. Phosphorylation of the N-terminal regulatory domain activates the methylesterase activity.

The protein localises to the cytoplasm. The enzyme catalyses [protein]-L-glutamate 5-O-methyl ester + H2O = L-glutamyl-[protein] + methanol + H(+). It catalyses the reaction L-glutaminyl-[protein] + H2O = L-glutamyl-[protein] + NH4(+). Its function is as follows. Involved in chemotaxis. Part of a chemotaxis signal transduction system that modulates chemotaxis in response to various stimuli. Catalyzes the demethylation of specific methylglutamate residues introduced into the chemoreceptors (methyl-accepting chemotaxis proteins or MCP) by CheR. Also mediates the irreversible deamidation of specific glutamine residues to glutamic acid. The sequence is that of Protein-glutamate methylesterase/protein-glutamine glutaminase 3 from Burkholderia lata (strain ATCC 17760 / DSM 23089 / LMG 22485 / NCIMB 9086 / R18194 / 383).